The sequence spans 368 residues: Putative agmatine deiminase (368 aa).

Cysteine 359 serves as the catalytic Amidino-cysteine intermediate.

Belongs to the agmatine deiminase family.

It carries out the reaction agmatine + H2O = N-carbamoylputrescine + NH4(+). This is Putative agmatine deiminase from Pectobacterium atrosepticum (strain SCRI 1043 / ATCC BAA-672) (Erwinia carotovora subsp. atroseptica).